The sequence spans 127 residues: Riboflavin kinase (127 aa).

Residue 10 to 15 (GLGEGK) participates in CDP binding. Positions 39 and 41 each coordinate Mg(2+). Thr96 and Glu104 together coordinate FMN. 109 to 112 (IQLR) lines the CDP pocket.

Belongs to the archaeal riboflavin kinase family. Mg(2+) serves as cofactor.

The catalysed reaction is riboflavin + CTP = CDP + FMN + H(+). It functions in the pathway cofactor biosynthesis; FMN biosynthesis; FMN from riboflavin (CTP route): step 1/1. Catalyzes the CTP-dependent phosphorylation of riboflavin (vitamin B2) to form flavin mononucleotide (FMN). This Methanococcus maripaludis (strain DSM 14266 / JCM 13030 / NBRC 101832 / S2 / LL) protein is Riboflavin kinase.